A 118-amino-acid polypeptide reads, in one-letter code: Large ribosomal subunit protein uL18 (118 aa).

The protein belongs to the universal ribosomal protein uL18 family. Part of the 50S ribosomal subunit; part of the 5S rRNA/L5/L18/L25 subcomplex. Contacts the 5S and 23S rRNAs.

Its function is as follows. This is one of the proteins that bind and probably mediate the attachment of the 5S RNA into the large ribosomal subunit, where it forms part of the central protuberance. This chain is Large ribosomal subunit protein uL18, found in Campylobacter jejuni subsp. jejuni serotype O:6 (strain 81116 / NCTC 11828).